The following is a 257-amino-acid chain: NH(3)-dependent NAD(+) synthetase (257 aa).

Residue 40-47 (GISGGIDS) participates in ATP binding. Asp46 lines the Mg(2+) pocket. Arg121 lines the deamido-NAD(+) pocket. Thr141 lines the ATP pocket. Mg(2+) is bound at residue Glu146. Residues Lys154 and Asp161 each contribute to the deamido-NAD(+) site. Residues Lys170 and Ser192 each coordinate ATP. Deamido-NAD(+) is bound at residue 238 to 239 (HK).

Belongs to the NAD synthetase family. Homodimer.

The catalysed reaction is deamido-NAD(+) + NH4(+) + ATP = AMP + diphosphate + NAD(+) + H(+). The protein operates within cofactor biosynthesis; NAD(+) biosynthesis; NAD(+) from deamido-NAD(+) (ammonia route): step 1/1. Catalyzes the ATP-dependent amidation of deamido-NAD to form NAD. Uses ammonia as a nitrogen source. This chain is NH(3)-dependent NAD(+) synthetase, found in Mycoplasmopsis pulmonis (strain UAB CTIP) (Mycoplasma pulmonis).